The following is a 370-amino-acid chain: Quinolinate synthase (370 aa).

The iminosuccinate site is built by histidine 62 and serine 83. Residue cysteine 128 coordinates [4Fe-4S] cluster. Residues 154–156 and serine 171 each bind iminosuccinate; that span reads YAN. Cysteine 215 contributes to the [4Fe-4S] cluster binding site. Residues 241–243 and threonine 258 each bind iminosuccinate; that span reads HPE. Cysteine 312 contributes to the [4Fe-4S] cluster binding site.

It belongs to the quinolinate synthase family. Type 1 subfamily. The cofactor is [4Fe-4S] cluster.

It is found in the cytoplasm. It catalyses the reaction iminosuccinate + dihydroxyacetone phosphate = quinolinate + phosphate + 2 H2O + H(+). It participates in cofactor biosynthesis; NAD(+) biosynthesis; quinolinate from iminoaspartate: step 1/1. Catalyzes the condensation of iminoaspartate with dihydroxyacetone phosphate to form quinolinate. The sequence is that of Quinolinate synthase from Neisseria meningitidis serogroup B (strain ATCC BAA-335 / MC58).